The chain runs to 473 residues: Myocyte-specific enhancer factor 2C (473 aa).

Residues 1–61 form the MADS-box domain; it reads MGRKKIQITR…NKLFQYASTD (61 aa). Position 4 is an N6-acetyllysine (lysine 4). Positions 58–86 form a DNA-binding region, mef2-type; it reads ASTDMDKVLLKYTEYNEPHESRTNSDIVE. Serine 59 carries the post-translational modification Phosphoserine; by CK2. Residues 91–116 are disordered; sequence KGLNGCDSPDPDADDSVGHSPESEDK. Residues serine 98, serine 106, and serine 110 each carry the phosphoserine modification. Lysine 116 and lysine 119 each carry N6-acetyllysine. A disordered region spans residues 180 to 206; sequence NSMSPGVTHRPPSAGNTGGLMGGDLTS. Phosphoserine is present on residues serine 222 and serine 228. N6-acetyllysine occurs at positions 234 and 239. At serine 240 the chain carries Phosphoserine. N6-acetyllysine occurs at positions 252 and 264. Residues 271 to 278 form a beta domain region; the sequence is SEDVDLLL. Phosphothreonine; by MAPK14 occurs at positions 293 and 300. The tract at residues 368–399 is transcription repressor; that stretch reads ACTSTHLSQSSNLSLPSTQSLNIKSEPVSPPR. A compositionally biased stretch (polar residues) spans 375-390; the sequence is SQSSNLSLPSTQSLNI. The interval 375-473 is disordered; it reads SQSSNLSLPS…RMRLSEGWAT (99 aa). Lysine 391 is covalently cross-linked (Glycyl lysine isopeptide (Lys-Gly) (interchain with G-Cter in SUMO)). Serine 396 carries the phosphoserine; by CDK5 modification. Serine 419 carries the post-translational modification Phosphoserine; by MAPK7. Residues 419-432 are compositionally biased toward low complexity; that stretch reads SPVDSLSSCSSSYD. Basic and acidic residues predominate over residues 433–443; it reads GSDREDHRNEF. Serine 445 is modified (phosphoserine).

Belongs to the MEF2 family. Forms a complex with class II HDACs in undifferentiating cells. On myogenic differentiation, HDACs are released into the cytoplasm allowing MEF2s to interact with other proteins for activation. Interacts with EP300 in differentiating cells; the interaction acetylates MEF2C leading to increased DNA binding and activation. Interacts with HDAC7 and CARM1. Interacts with HDAC4 and HDAC9; the interaction with HDACs represses transcriptional activity. Interacts with LPIN1. Interacts with MYOCD. Interacts with AKAP13. Interacts with FOXK1; the interaction inhibits MEF2C transactivation activity. Interacts (via N-terminus) with HABP4; this interaction decreases DNA-binding activity of MEF2C in myocardial cells in response to mechanical stress. Interacts with JPH2; interaction specifically takes place with the Junctophilin-2 N-terminal fragment cleavage product of JPH2. Interacts (via MADS box) with SOX18. Interacts with PHF7; the interaction promotes MEF2C binding to its transcription targets. Post-translationally, phosphorylated on Ser-59; which enhances DNA binding activity. Phosphorylated on Ser-396; which is required for Lys-391 sumoylation and inhibits transcriptional activity. In terms of processing, acetylated by p300 on several sites in diffentiating myocytes. Acetylation on Lys-4 increases DNA binding and transactivation. Sumoylated on Lys-391 with SUMO2 but not SUMO1; which represses transcriptional activity. Post-translationally, proteolytically cleaved in cerebellar granule neurons on several sites by caspase 3 and caspase 7 following neurotoxicity. Preferentially cleaves the CDK5-mediated hyperphosphorylated form which leads to neuron apoptosis and transcriptional inactivation. In terms of tissue distribution, expressed in the heart. Expressed in cardiac myocytes (at protein level).

Its subcellular location is the nucleus. The protein resides in the cytoplasm. The protein localises to the sarcoplasm. Transcription activator which binds specifically to the MEF2 element present in the regulatory regions of many muscle-specific genes. Controls cardiac morphogenesis and myogenesis, and is also involved in vascular development. Enhances transcriptional activation mediated by SOX18. Plays an essential role in hippocampal-dependent learning and memory by suppressing the number of excitatory synapses and thus regulating basal and evoked synaptic transmission. Crucial for normal neuronal development, distribution, and electrical activity in the neocortex. Necessary for proper development of megakaryocytes and platelets and for bone marrow B-lymphopoiesis. Required for B-cell survival and proliferation in response to BCR stimulation, efficient IgG1 antibody responses to T-cell-dependent antigens and for normal induction of germinal center B-cells. May also be involved in neurogenesis and in the development of cortical architecture. The polypeptide is Myocyte-specific enhancer factor 2C (Rattus norvegicus (Rat)).